Consider the following 363-residue polypeptide: UDP-N-acetylglucosamine--N-acetylmuramyl-(pentapeptide) pyrophosphoryl-undecaprenol N-acetylglucosamine transferase (363 aa).

UDP-N-acetyl-alpha-D-glucosamine-binding positions include 15–17, asparagine 127, arginine 163, serine 191, isoleucine 244, 263–268, and glutamine 288; these read TGG and ALTVSE.

The protein belongs to the glycosyltransferase 28 family. MurG subfamily.

The protein localises to the cell inner membrane. It carries out the reaction di-trans,octa-cis-undecaprenyl diphospho-N-acetyl-alpha-D-muramoyl-L-alanyl-D-glutamyl-meso-2,6-diaminopimeloyl-D-alanyl-D-alanine + UDP-N-acetyl-alpha-D-glucosamine = di-trans,octa-cis-undecaprenyl diphospho-[N-acetyl-alpha-D-glucosaminyl-(1-&gt;4)]-N-acetyl-alpha-D-muramoyl-L-alanyl-D-glutamyl-meso-2,6-diaminopimeloyl-D-alanyl-D-alanine + UDP + H(+). The protein operates within cell wall biogenesis; peptidoglycan biosynthesis. Functionally, cell wall formation. Catalyzes the transfer of a GlcNAc subunit on undecaprenyl-pyrophosphoryl-MurNAc-pentapeptide (lipid intermediate I) to form undecaprenyl-pyrophosphoryl-MurNAc-(pentapeptide)GlcNAc (lipid intermediate II). This Pectobacterium carotovorum subsp. carotovorum (strain PC1) protein is UDP-N-acetylglucosamine--N-acetylmuramyl-(pentapeptide) pyrophosphoryl-undecaprenol N-acetylglucosamine transferase.